The primary structure comprises 340 residues: 4-hydroxy-3-methylbut-2-enyl diphosphate reductase (340 aa).

Position 21 (cysteine 21) interacts with [4Fe-4S] cluster. (2E)-4-hydroxy-3-methylbut-2-enyl diphosphate-binding residues include histidine 50 and histidine 83. Dimethylallyl diphosphate-binding residues include histidine 50 and histidine 83. Isopentenyl diphosphate is bound by residues histidine 50 and histidine 83. A [4Fe-4S] cluster-binding site is contributed by cysteine 105. Residue histidine 133 coordinates (2E)-4-hydroxy-3-methylbut-2-enyl diphosphate. Histidine 133 provides a ligand contact to dimethylallyl diphosphate. Residue histidine 133 coordinates isopentenyl diphosphate. Residue glutamate 135 is the Proton donor of the active site. Threonine 173 contributes to the (2E)-4-hydroxy-3-methylbut-2-enyl diphosphate binding site. Cysteine 203 contributes to the [4Fe-4S] cluster binding site. Positions 231, 232, 233, and 276 each coordinate (2E)-4-hydroxy-3-methylbut-2-enyl diphosphate. Dimethylallyl diphosphate is bound by residues serine 231, serine 232, asparagine 233, and serine 276. Isopentenyl diphosphate contacts are provided by serine 231, serine 232, asparagine 233, and serine 276. The tract at residues lysine 320 to arginine 340 is disordered.

Belongs to the IspH family. [4Fe-4S] cluster serves as cofactor.

The enzyme catalyses isopentenyl diphosphate + 2 oxidized [2Fe-2S]-[ferredoxin] + H2O = (2E)-4-hydroxy-3-methylbut-2-enyl diphosphate + 2 reduced [2Fe-2S]-[ferredoxin] + 2 H(+). It carries out the reaction dimethylallyl diphosphate + 2 oxidized [2Fe-2S]-[ferredoxin] + H2O = (2E)-4-hydroxy-3-methylbut-2-enyl diphosphate + 2 reduced [2Fe-2S]-[ferredoxin] + 2 H(+). It participates in isoprenoid biosynthesis; dimethylallyl diphosphate biosynthesis; dimethylallyl diphosphate from (2E)-4-hydroxy-3-methylbutenyl diphosphate: step 1/1. The protein operates within isoprenoid biosynthesis; isopentenyl diphosphate biosynthesis via DXP pathway; isopentenyl diphosphate from 1-deoxy-D-xylulose 5-phosphate: step 6/6. Functionally, catalyzes the conversion of 1-hydroxy-2-methyl-2-(E)-butenyl 4-diphosphate (HMBPP) into a mixture of isopentenyl diphosphate (IPP) and dimethylallyl diphosphate (DMAPP). Acts in the terminal step of the DOXP/MEP pathway for isoprenoid precursor biosynthesis. This is 4-hydroxy-3-methylbut-2-enyl diphosphate reductase from Acidothermus cellulolyticus (strain ATCC 43068 / DSM 8971 / 11B).